The chain runs to 503 residues: Maturase K (503 aa).

It belongs to the intron maturase 2 family. MatK subfamily.

Its subcellular location is the plastid. The protein localises to the chloroplast. Functionally, usually encoded in the trnK tRNA gene intron. Probably assists in splicing its own and other chloroplast group II introns. This chain is Maturase K, found in Rosa californica (California wild rose).